The sequence spans 974 residues: RING finger protein nhl-1 (974 aa).

The interval 1-29 is disordered; that stretch reads MSSSPQNEAEAREKMRELMSRPPSSRPAD. A compositionally biased stretch (basic and acidic residues) spans 9–19; that stretch reads AEAREKMRELM. Residues 43–84 form an RING-type zinc finger; it reads CPICLDRYKQPKLLPCQHTFCYPCLESCADTLHRNLKCPECR. Disordered stretches follow at residues 360 to 395 and 416 to 548; these read VKSD…IRYR and SLLT…DFPV. Residues 416 to 431 show a composition bias toward polar residues; it reads SLLTTSVTADSSSRTS. Positions 437 to 446 are enriched in basic and acidic residues; that stretch reads RVTRSVEPTK. A compositionally biased stretch (polar residues) spans 447-465; the sequence is SRPTSLIVPNTETPRTVSP. The segment covering 488–501 has biased composition (pro residues); sequence APLPQLPIRKPPLP. The span at 511–528 shows a compositional bias: basic and acidic residues; it reads LNEKVETIRRAHQQRQDA. The span at 529–538 shows a compositional bias: low complexity; the sequence is SRAASRAVSS. NHL repeat units lie at residues 699–742, 746–788, 792–835, 839–883, 887–930, and 934–974; these read RAVF…FDKD, VRQF…FGLE, LFSF…FDKN, IAKF…FDPH, LFSF…FDAQ, and VSSF…IQIF.

As to quaternary structure, interacts with ubc-13.

The sequence is that of RING finger protein nhl-1 from Caenorhabditis elegans.